A 132-amino-acid polypeptide reads, in one-letter code: Major pollen allergen Art v 1 (132 aa).

The signal sequence occupies residues 1–24 (MAKCSYVFCAVLLIFIVAIGEMEA). A defensin-like domain region spans residues 28–77 (KLCEKTSKTYSGKCDNKKCDKKCIEWEKAQHGACHKREAGKESCFCYFDC). Intrachain disulfides connect Cys-30–Cys-77, Cys-41–Cys-61, Cys-46–Cys-71, and Cys-50–Cys-73. Epitope recognized by IgE antibodies of mugwort pollen-sensitized patients stretches follow at residues 64-70 (REAGKES) and 79-87 (KSPPGATPA). Residues 81 to 132 (PPGATPAPPGAAPPPAAGGSPSPPADGGSPPPPADGGSPPVDGGSPPPPSTH) are disordered. Over residues 83–114 (GATPAPPGAAPPPAAGGSPSPPADGGSPPPPA) the composition is skewed to pro residues. The segment covering 115 to 124 (DGGSPPVDGG) has biased composition (low complexity).

It in the N-terminal section; belongs to the DEFL family. Post-translationally, the mature protein extracted from the plant exhibits an average rate of 76% of hydroxyprolines. O-glycosylated. O-linkage of 3 galactoses plus 9-16 or 21-23 arabinose residues attached on one or two hydroxyprolines.

It localises to the secreted. The chain is Major pollen allergen Art v 1 from Artemisia vulgaris (Mugwort).